The sequence spans 274 residues: Formamidopyrimidine-DNA glycosylase (274 aa).

The Schiff-base intermediate with DNA role is filled by Pro-2. Glu-3 (proton donor) is an active-site residue. The active-site Proton donor; for beta-elimination activity is Lys-58. 3 residues coordinate DNA: His-91, Arg-110, and Lys-152. The segment at 237–271 (KVYGRKNLPCLVCENKIETVVIAGRHSAFCPHCQP) adopts an FPG-type zinc-finger fold. The active-site Proton donor; for delta-elimination activity is Arg-261.

It belongs to the FPG family. As to quaternary structure, monomer. It depends on Zn(2+) as a cofactor.

The catalysed reaction is Hydrolysis of DNA containing ring-opened 7-methylguanine residues, releasing 2,6-diamino-4-hydroxy-5-(N-methyl)formamidopyrimidine.. It carries out the reaction 2'-deoxyribonucleotide-(2'-deoxyribose 5'-phosphate)-2'-deoxyribonucleotide-DNA = a 3'-end 2'-deoxyribonucleotide-(2,3-dehydro-2,3-deoxyribose 5'-phosphate)-DNA + a 5'-end 5'-phospho-2'-deoxyribonucleoside-DNA + H(+). Involved in base excision repair of DNA damaged by oxidation or by mutagenic agents. Acts as a DNA glycosylase that recognizes and removes damaged bases. Has a preference for oxidized purines, such as 7,8-dihydro-8-oxoguanine (8-oxoG). Has AP (apurinic/apyrimidinic) lyase activity and introduces nicks in the DNA strand. Cleaves the DNA backbone by beta-delta elimination to generate a single-strand break at the site of the removed base with both 3'- and 5'-phosphates. This Legionella pneumophila subsp. pneumophila (strain Philadelphia 1 / ATCC 33152 / DSM 7513) protein is Formamidopyrimidine-DNA glycosylase.